The sequence spans 599 residues: Glutamine--fructose-6-phosphate aminotransferase [isomerizing] (599 aa).

The active-site Nucleophile; for GATase activity is C2. The Glutamine amidotransferase type-2 domain occupies 2–223 (CGIIGYIGNE…DRDIVILRKE (222 aa)). SIS domains are found at residues 286–423 (LGKE…IIGK) and 452–589 (IAEE…VDKP). K594 serves as the catalytic For Fru-6P isomerization activity.

Homodimer.

The protein localises to the cytoplasm. It carries out the reaction D-fructose 6-phosphate + L-glutamine = D-glucosamine 6-phosphate + L-glutamate. In terms of biological role, catalyzes the first step in hexosamine metabolism, converting fructose-6P into glucosamine-6P using glutamine as a nitrogen source. The polypeptide is Glutamine--fructose-6-phosphate aminotransferase [isomerizing] (glmS) (Methanococcus maripaludis (strain DSM 14266 / JCM 13030 / NBRC 101832 / S2 / LL)).